The primary structure comprises 140 residues: Ribonuclease P protein subunit p20 (140 aa).

Belongs to the histone-like Alba family. In terms of assembly, component of nuclear RNase P and RNase MRP complexes. RNase P consists of a catalytic RNA moiety and 10 different protein chains; POP1, POP4, POP5, POP7, RPP14, RPP21, RPP25, RPP30, RPP38 and RPP40. Within the RNase P complex, POP1, POP7 and RPP25 form the 'finger' subcomplex, POP5, RPP14, RPP40 and homodimeric RPP30 form the 'palm' subcomplex, and RPP21, POP4 and RPP38 form the 'wrist' subcomplex. All subunits of the RNase P complex interact with the catalytic RNA. Several subunits of RNase P are also part of the RNase MRP complex. RNase MRP consists of a catalytic RNA moiety and about 8 protein subunits; POP1, POP7, RPP25, RPP30, RPP38, RPP40 and possibly also POP4 and POP5. Interacts with SMN1. POP7 forms a heterodimer with RPP25 that binds to the P3 stem loop of the catalytic RNA.

It is found in the nucleus. The protein localises to the nucleolus. It localises to the cytoplasm. Its subcellular location is the cytoplasmic granule. Functionally, component of ribonuclease P, a ribonucleoprotein complex that generates mature tRNA molecules by cleaving their 5'-ends. Also a component of the MRP ribonuclease complex, which cleaves pre-rRNA sequences. This is Ribonuclease P protein subunit p20 (POP7) from Bos taurus (Bovine).